A 156-amino-acid chain; its full sequence is Cyanate hydratase (156 aa).

Catalysis depends on residues Arg96, Glu99, and Ser122.

It belongs to the cyanase family.

It carries out the reaction cyanate + hydrogencarbonate + 3 H(+) = NH4(+) + 2 CO2. Functionally, catalyzes the reaction of cyanate with bicarbonate to produce ammonia and carbon dioxide. The chain is Cyanate hydratase from Mycobacteroides abscessus (strain ATCC 19977 / DSM 44196 / CCUG 20993 / CIP 104536 / JCM 13569 / NCTC 13031 / TMC 1543 / L948) (Mycobacterium abscessus).